The sequence spans 175 residues: RNA pyrophosphohydrolase (175 aa).

Residues 6–149 form the Nudix hydrolase domain; that stretch reads GYRPNVGIVI…KRDVYRRVMK (144 aa). Positions 38 to 59 match the Nudix box motif; the sequence is GGINPGETAEQAMYRELFEEVG.

The protein belongs to the Nudix hydrolase family. RppH subfamily. Requires a divalent metal cation as cofactor.

In terms of biological role, accelerates the degradation of transcripts by removing pyrophosphate from the 5'-end of triphosphorylated RNA, leading to a more labile monophosphorylated state that can stimulate subsequent ribonuclease cleavage. The polypeptide is RNA pyrophosphohydrolase (Serratia proteamaculans (strain 568)).